A 426-amino-acid polypeptide reads, in one-letter code: 3-phosphoshikimate 1-carboxyvinyltransferase (426 aa).

Lys22, Ser23, and Arg27 together coordinate 3-phosphoshikimate. Lys22 is a binding site for phosphoenolpyruvate. Phosphoenolpyruvate contacts are provided by Gly96 and Arg124. 3-phosphoshikimate-binding residues include Ser170, Ser171, Gln172, Ser198, Asp314, Asn337, and Lys341. Residue Gln172 participates in phosphoenolpyruvate binding. Asp314 serves as the catalytic Proton acceptor. Positions 345, 387, and 412 each coordinate phosphoenolpyruvate.

Belongs to the EPSP synthase family. Monomer.

It is found in the cytoplasm. The enzyme catalyses 3-phosphoshikimate + phosphoenolpyruvate = 5-O-(1-carboxyvinyl)-3-phosphoshikimate + phosphate. The protein operates within metabolic intermediate biosynthesis; chorismate biosynthesis; chorismate from D-erythrose 4-phosphate and phosphoenolpyruvate: step 6/7. Its function is as follows. Catalyzes the transfer of the enolpyruvyl moiety of phosphoenolpyruvate (PEP) to the 5-hydroxyl of shikimate-3-phosphate (S3P) to produce enolpyruvyl shikimate-3-phosphate and inorganic phosphate. The chain is 3-phosphoshikimate 1-carboxyvinyltransferase from Colwellia psychrerythraea (strain 34H / ATCC BAA-681) (Vibrio psychroerythus).